We begin with the raw amino-acid sequence, 262 residues long: Lens fiber major intrinsic protein (262 aa).

At Met-1 to Phe-9 the chain is on the cytoplasmic side. Residues Trp-10 to Gly-29 form a helical membrane-spanning segment. Over Ala-30–Val-41 the chain is Extracellular. A helical transmembrane segment spans residues Leu-42–Leu-59. Residues Gly-60–His-61 lie on the Cytoplasmic side of the membrane. Residues Val-62–Leu-77 constitute an intramembrane region (discontinuously helical). An NPA 1 motif is present at residues Asn-68–Ala-70. Over Ala-78–Ser-82 the chain is Cytoplasmic. A helical transmembrane segment spans residues Leu-83–Gly-106. The Extracellular portion of the chain corresponds to Val-107–Pro-127. The chain crosses the membrane as a helical span at residues Gly-128–Ser-148. Topologically, residues Phe-149–Arg-156 are cytoplasmic. The chain crosses the membrane as a helical span at residues Pro-157–Gly-175. The Extracellular portion of the chain corresponds to Ile-176 to Phe-178. Residues Thr-179 to Val-193 constitute an intramembrane region (discontinuously helical). The NPA 2 motif lies at Asn-184 to Ala-186. Over Ile-194–Asn-200 the chain is Extracellular. Residues His-201–Ala-222 traverse the membrane as a helical segment. Residues Leu-223–Leu-262 are Cytoplasmic-facing. Residues Ala-227 to Leu-237 are interaction with CALM. A disordered region spans residues Glu-240 to Leu-262. Residues Ala-243 to Glu-253 show a composition bias toward pro residues.

The protein belongs to the MIP/aquaporin (TC 1.A.8) family. Homotetramer; each monomer provides an independent water pore. Two homotetramers on opposing membranes can dimerize, forming a cell-cell junction. Interacts with CALM; the calcium-calmodulin/CALM complex interacts with the cytoplasmic domains of two aquaporins, leading to channel closure. During early stages of lens development, interacts through its C-terminal region with Cx56 and GJA8/Cx45.6. Major component of lens fiber gap junctions.

The protein resides in the cell membrane. It localises to the cell junction. The catalysed reaction is H2O(in) = H2O(out). The water channel activity is inhibited by calcium through calmodulin/CALM. Functionally, aquaporins form homotetrameric transmembrane channels, with each monomer independently mediating water transport across the plasma membrane along its osmotic gradient. Specifically expressed in lens fiber cells, this aquaporin is crucial for maintaining lens water homeostasis and transparency. Beyond water permeability, it also acts as a cell-to-cell adhesion molecule, forming thin junctions between lens fiber cells that are essential for maintaining the ordered structure and transparency of the lens. This Gallus gallus (Chicken) protein is Lens fiber major intrinsic protein.